Reading from the N-terminus, the 477-residue chain is Pyruvate kinase (477 aa).

Substrate is bound at residue Arg34. K(+)-binding residues include Asn36, Asp64, and Thr65. 36–39 (NTAH) serves as a coordination point for ATP. ATP is bound by residues Arg71 and Lys150. Glu216 contributes to the Mg(2+) binding site. Gly239, Asp240, and Thr272 together coordinate substrate. Asp240 serves as a coordination point for Mg(2+).

It belongs to the pyruvate kinase family. As to quaternary structure, homotetramer. Mg(2+) serves as cofactor. It depends on K(+) as a cofactor.

The catalysed reaction is pyruvate + ATP = phosphoenolpyruvate + ADP + H(+). It participates in carbohydrate degradation; glycolysis; pyruvate from D-glyceraldehyde 3-phosphate: step 5/5. In Borreliella burgdorferi (strain ATCC 35210 / DSM 4680 / CIP 102532 / B31) (Borrelia burgdorferi), this protein is Pyruvate kinase (pyk).